The primary structure comprises 163 residues: Cyanate hydratase (163 aa).

Residues R103, E106, and S129 contribute to the active site.

This sequence belongs to the cyanase family.

It catalyses the reaction cyanate + hydrogencarbonate + 3 H(+) = NH4(+) + 2 CO2. In terms of biological role, catalyzes the reaction of cyanate with bicarbonate to produce ammonia and carbon dioxide. This chain is Cyanate hydratase, found in Paracoccidioides brasiliensis (strain Pb18).